We begin with the raw amino-acid sequence, 152 residues long: Nucleoside diphosphate kinase B (152 aa).

Residues 1–66 (MANLERTFIA…DRPFFPGLVK (66 aa)) form an interaction with AKAP13 region. ATP is bound by residues lysine 12, phenylalanine 60, arginine 88, threonine 94, arginine 105, and asparagine 115. The Pros-phosphohistidine intermediate role is filled by histidine 118.

The protein belongs to the NDK family. In terms of assembly, hexamer of two different chains: An and B (A6, A5B, A4B2, A3B3, A2B4, AB5, B6). Interacts with CAPN8. Interacts with AKAP13. Interacts with ITGB1BP1 (via C-terminal domain region). Interacts with BCL2L10. Requires Mg(2+) as cofactor. As to expression, expressed in the base region of the oxyntic and pyloric mucosae.

The protein resides in the cytoplasm. The protein localises to the cell projection. Its subcellular location is the lamellipodium. It localises to the ruffle. It is found in the nucleus. It carries out the reaction a 2'-deoxyribonucleoside 5'-diphosphate + ATP = a 2'-deoxyribonucleoside 5'-triphosphate + ADP. It catalyses the reaction a ribonucleoside 5'-diphosphate + ATP = a ribonucleoside 5'-triphosphate + ADP. The catalysed reaction is ATP + protein L-histidine = ADP + protein N-phospho-L-histidine.. Its function is as follows. Major role in the synthesis of nucleoside triphosphates other than ATP. The ATP gamma phosphate is transferred to the NDP beta phosphate via a ping-pong mechanism, using a phosphorylated active-site intermediate. Negatively regulates Rho activity by interacting with AKAP13/LBC. Acts as a transcriptional activator of the MYC gene; binds DNA non-specifically. Binds to both single-stranded guanine- and cytosine-rich strands within the nuclease hypersensitive element (NHE) III(1) region of the MYC gene promoter. Does not bind to duplex NHE III(1). Has G-quadruplex (G4) DNA-binding activity, which is independent of its nucleotide-binding and kinase activity. Binds both folded and unfolded G4 with similar low nanomolar affinities. Stabilizes folded G4s regardless of whether they are prefolded or not. Exhibits histidine protein kinase activity. In Mus musculus (Mouse), this protein is Nucleoside diphosphate kinase B (Nme2).